Consider the following 162-residue polypeptide: Nucleotide-binding protein ABSDF0503 (162 aa).

Belongs to the YajQ family.

Nucleotide-binding protein. The chain is Nucleotide-binding protein ABSDF0503 from Acinetobacter baumannii (strain SDF).